Here is a 200-residue protein sequence, read N- to C-terminus: Probable GTP-binding protein EngB (200 aa).

The EngB-type G domain maps to 26–200 (SIPEVALAGR…IYEIAQCIKK (175 aa)). Residues 34–41 (GRSNVGKS), 61–65 (GCTRQ), 80–83 (DLPG), 147–150 (TKID), and 179–181 (VSS) each bind GTP. Residues S41 and T63 each coordinate Mg(2+).

This sequence belongs to the TRAFAC class TrmE-Era-EngA-EngB-Septin-like GTPase superfamily. EngB GTPase family. Requires Mg(2+) as cofactor.

Necessary for normal cell division and for the maintenance of normal septation. The protein is Probable GTP-binding protein EngB of Ehrlichia ruminantium (strain Gardel).